Reading from the N-terminus, the 281-residue chain is ATP phosphoribosyltransferase (281 aa).

This sequence belongs to the ATP phosphoribosyltransferase family. Long subfamily. Requires Mg(2+) as cofactor.

It localises to the cytoplasm. It carries out the reaction 1-(5-phospho-beta-D-ribosyl)-ATP + diphosphate = 5-phospho-alpha-D-ribose 1-diphosphate + ATP. It functions in the pathway amino-acid biosynthesis; L-histidine biosynthesis; L-histidine from 5-phospho-alpha-D-ribose 1-diphosphate: step 1/9. Its activity is regulated as follows. Feedback inhibited by histidine. Its function is as follows. Catalyzes the condensation of ATP and 5-phosphoribose 1-diphosphate to form N'-(5'-phosphoribosyl)-ATP (PR-ATP). Has a crucial role in the pathway because the rate of histidine biosynthesis seems to be controlled primarily by regulation of HisG enzymatic activity. The chain is ATP phosphoribosyltransferase from Corynebacterium aurimucosum (strain ATCC 700975 / DSM 44827 / CIP 107346 / CN-1) (Corynebacterium nigricans).